Here is a 485-residue protein sequence, read N- to C-terminus: Argininosuccinate lyase (485 aa).

Belongs to the lyase 1 family. Argininosuccinate lyase subfamily.

Its subcellular location is the cytoplasm. The catalysed reaction is 2-(N(omega)-L-arginino)succinate = fumarate + L-arginine. The protein operates within amino-acid biosynthesis; L-arginine biosynthesis; L-arginine from L-ornithine and carbamoyl phosphate: step 3/3. This Paracidovorax citrulli (strain AAC00-1) (Acidovorax citrulli) protein is Argininosuccinate lyase.